The following is a 412-amino-acid chain: MIIRNFPKQTNSLLPFELNPNKFPSYYGYPMYGYTGSYRNIEFPISQNGNFLQATSGNPPGRRVPEPIYSSGVQRSTRINYLPSSQSCAPFQSHADCDKSPNSKGGESYDWNYGWSSCCSGFCPSKRECAKPDPKECDIGNDILDRDPLLKIEWDVNAPNYRCTYDLHKINTSEQINLFVGKNGKNKSYDEIMTSFCEIPSHICPIDPGDGSLNDDKRGKEMEKCSRLISLDDEGTRCRAWAATQDNKTIDNIKEEYCLHNPNSPDCRCINRSSNSLYDEAKKNNPFPDGCWYKPCSTSVYLKTSDILSDEKHCPKEMCQVIYNVNQNNDVVIKDNTNNIKCDFTKFIPPTPGPNPGPTPGPNPGPIIPPINPLPLPNPTFLENKNVLITGIAVTGVAVLLFLLLMFKSKTT.

Residues Asn171, Asn186, Asn247, and Asn271 are each glycosylated (N-linked (GlcNAc...) asparagine; by host). The helical transmembrane segment at 387-407 threads the bilayer; that stretch reads VLITGIAVTGVAVLLFLLLMF.

Belongs to the IIV-6 337L family.

It is found in the virion membrane. The chain is Putative membrane protein 337L from Acheta domesticus (House cricket).